The primary structure comprises 339 residues: Glyceraldehyde-3-phosphate dehydrogenase (339 aa).

NAD(+) is bound by residues 12–13 (RI), Asp-35, and Lys-84. Residues 155–157 (SCT), Thr-186, 215–216 (TG), and Arg-238 each bind D-glyceraldehyde 3-phosphate. Cys-156 functions as the Nucleophile in the catalytic mechanism. Asn-320 provides a ligand contact to NAD(+).

The protein belongs to the glyceraldehyde-3-phosphate dehydrogenase family. In terms of assembly, homotetramer.

It localises to the cytoplasm. The enzyme catalyses D-glyceraldehyde 3-phosphate + phosphate + NAD(+) = (2R)-3-phospho-glyceroyl phosphate + NADH + H(+). It participates in carbohydrate degradation; glycolysis; pyruvate from D-glyceraldehyde 3-phosphate: step 1/5. This chain is Glyceraldehyde-3-phosphate dehydrogenase (GAPD), found in Mastigamoeba balamuthi (Phreatamoeba balamuthi).